We begin with the raw amino-acid sequence, 317 residues long: Ribosomal protein L11 methyltransferase (317 aa).

S-adenosyl-L-methionine-binding residues include threonine 158, glycine 179, aspartate 201, and asparagine 244.

Belongs to the methyltransferase superfamily. PrmA family.

Its subcellular location is the cytoplasm. The enzyme catalyses L-lysyl-[protein] + 3 S-adenosyl-L-methionine = N(6),N(6),N(6)-trimethyl-L-lysyl-[protein] + 3 S-adenosyl-L-homocysteine + 3 H(+). In terms of biological role, methylates ribosomal protein L11. This chain is Ribosomal protein L11 methyltransferase, found in Streptococcus uberis (strain ATCC BAA-854 / 0140J).